The sequence spans 59 residues: Large ribosomal subunit protein bL32 (59 aa).

This sequence belongs to the bacterial ribosomal protein bL32 family. As to quaternary structure, part of the 50S ribosomal subunit.

The protein is Large ribosomal subunit protein bL32 (rpmF) of Bacillus subtilis (strain 168).